The chain runs to 144 residues: Gas vesicle protein A1 (144 aa).

Residues Glu72 to Glu144 are disordered. Basic and acidic residues predominate over residues Lys113–Ser127.

It belongs to the gas vesicle GvpA family. As to quaternary structure, the gas vesicle shell is 2 nm thick and consists of a single layer of this protein. It forms helical ribs nearly perpendicular to the long axis of the vesicle.

It is found in the gas vesicle shell. Functionally, gas vesicles are hollow, gas filled proteinaceous nanostructures found in some microorganisms. During planktonic growth they allow positioning of the organism at a favorable depth for light or nutrient acquisition. GvpA forms the protein shell. It is not clear what function GVs perform in soil bacteria. The chain is Gas vesicle protein A1 from Streptomyces coelicolor (strain ATCC BAA-471 / A3(2) / M145).